A 123-amino-acid chain; its full sequence is Large ribosomal subunit protein bL19 (123 aa).

The protein belongs to the bacterial ribosomal protein bL19 family.

This protein is located at the 30S-50S ribosomal subunit interface and may play a role in the structure and function of the aminoacyl-tRNA binding site. This chain is Large ribosomal subunit protein bL19 (rplS), found in Treponema pallidum (strain Nichols).